A 250-amino-acid polypeptide reads, in one-letter code: Triosephosphate isomerase (250 aa).

9–11 (NWK) lines the substrate pocket. The Electrophile role is filled by histidine 96. Glutamate 166 functions as the Proton acceptor in the catalytic mechanism. Substrate is bound by residues glycine 172, serine 212, and 233–234 (GG).

This sequence belongs to the triosephosphate isomerase family. As to quaternary structure, homodimer.

The protein localises to the cytoplasm. It catalyses the reaction D-glyceraldehyde 3-phosphate = dihydroxyacetone phosphate. Its pathway is carbohydrate biosynthesis; gluconeogenesis. The protein operates within carbohydrate degradation; glycolysis; D-glyceraldehyde 3-phosphate from glycerone phosphate: step 1/1. Its function is as follows. Involved in the gluconeogenesis. Catalyzes stereospecifically the conversion of dihydroxyacetone phosphate (DHAP) to D-glyceraldehyde-3-phosphate (G3P). This is Triosephosphate isomerase from Chlorobium phaeovibrioides (strain DSM 265 / 1930) (Prosthecochloris vibrioformis (strain DSM 265)).